Reading from the N-terminus, the 485-residue chain is Adenosylhomocysteinase 1 (485 aa).

Substrate-binding residues include T64, D139, and E205. Residue 206–208 coordinates NAD(+); the sequence is TTT. Substrate is bound by residues K235 and D239. NAD(+) contacts are provided by residues 271-276, E292, 348-350, N397, H404, K479, 479-483, and Y483; these read GDVGKG, IGH, and KPPHY.

This sequence belongs to the adenosylhomocysteinase family. In terms of assembly, homotetramer. NAD(+) serves as cofactor.

The enzyme catalyses S-adenosyl-L-homocysteine + H2O = L-homocysteine + adenosine. The protein operates within amino-acid biosynthesis; L-homocysteine biosynthesis; L-homocysteine from S-adenosyl-L-homocysteine: step 1/1. In terms of biological role, essential protein during embryogenesis. Adenosylhomocysteine is a competitive inhibitor of S-adenosyl-L-methionine-dependent methyl transferase reactions; therefore adenosylhomocysteinase may play a key role in the control of methylations via regulation of the intracellular concentration of adenosylhomocysteine. Required for DNA methylation-dependent gene silencing. The protein is Adenosylhomocysteinase 1 of Arabidopsis thaliana (Mouse-ear cress).